Reading from the N-terminus, the 2236-residue chain is uncharacterized protein (2236 aa).

Spectrin repeat units follow at residues 46–146 (QVYL…RQLE) and 238–335 (QKFV…TDIE). Coiled coils occupy residues 496–541 (VVEQ…TVNS) and 603–631 (DDQQ…VGRQ). Spectrin repeat units follow at residues 839 to 949 (YEYD…KTLK), 1048 to 1146 (KKLE…KRME), 1261 to 1361 (LGAE…VDLN), 1367 to 1459 (ILID…KSLA), and 1562 to 1667 (QKVV…NRLE). Residues 1835 to 1869 (QNSTDAEKKLSLVSERLNALKKQLDLLAEKIAVDD) adopt a coiled-coil conformation. 2 consecutive EF-hand domains span residues 2104–2139 (KQLH…QGYN) and 2141–2176 (SAEN…HETT). Residues Asp-2154, Ser-2156, Thr-2158, His-2160, and Asp-2165 each contribute to the Ca(2+) site.

It belongs to the spectrin family.

This is an uncharacterized protein from Caenorhabditis elegans.